A 322-amino-acid chain; its full sequence is Germ cell-specific gene 1-like protein (322 aa).

Residues 1–8 (MKTSRRGR) are Cytoplasmic-facing. The helical transmembrane segment at 9–29 (ALLAVALNLLALLFATTAFLT) threads the bilayer. The Extracellular segment spans residues 30 to 122 (TYWCQGTQRV…FIDLAPASEK (93 aa)). The helical transmembrane segment at 123–143 (GVLWLSVVSEVLYILLLVVGF) threads the bilayer. The Cytoplasmic segment spans residues 144–163 (SLMCLELLHSSSVIDGLKLN). A helical membrane pass occupies residues 164–184 (AFAAVFTVLSGLLGMVAHMMY). Residues 185–207 (TQVFQVTVSLGPEDWRPHSWDYG) are Extracellular-facing. Residues 208–228 (WSFCLAWGSFTCCMAASVTTL) form a helical membrane-spanning segment. Topologically, residues 229–322 (NSYTKTVIEF…RQCWVLGHWV (94 aa)) are cytoplasmic. Ser274 carries the phosphoserine modification.

Belongs to the GSG1 family. In terms of assembly, component of the inner core of AMPAR complexes. AMPAR complexes consist of an inner core made of 4 pore-forming GluA/GRIA proteins (GRIA1, GRIA2, GRIA3 and GRIA4) and 4 major auxiliary subunits arranged in a twofold symmetry. One of the two pairs of distinct binding sites is occupied either by CNIH2, CNIH3 or CACNG2, CACNG3. The other harbors CACNG2, CACNG3, CACNG4, CACNG8 or GSG1L. This inner core of AMPAR complexes is complemented by outer core constituents binding directly to the GluA/GRIA proteins at sites distinct from the interaction sites of the inner core constituents. Outer core constituents include at least PRRT1, PRRT2, CKAMP44/SHISA9, FRRS1L and NRN1. The proteins of the inner and outer core serve as a platform for other, more peripherally associated AMPAR constituents. Alone or in combination, these auxiliary subunits control the gating and pharmacology of the AMPAR complexes and profoundly impact their biogenesis and protein processing. Expressed in the brain (at protein level).

It localises to the cell membrane. The protein resides in the synapse. In terms of biological role, as a component of the inner core of AMPAR complexes, modifies AMPA receptor (AMPAR) gating. The protein is Germ cell-specific gene 1-like protein (Gsg1l) of Rattus norvegicus (Rat).